Consider the following 195-residue polypeptide: Molybdenum cofactor guanylyltransferase (195 aa).

GTP contacts are provided by residues 12 to 14 (LAG), lysine 25, asparagine 53, aspartate 70, and aspartate 100. Residue aspartate 100 coordinates Mg(2+).

It belongs to the MobA family. In terms of assembly, monomer. It depends on Mg(2+) as a cofactor.

It is found in the cytoplasm. It catalyses the reaction Mo-molybdopterin + GTP + H(+) = Mo-molybdopterin guanine dinucleotide + diphosphate. Transfers a GMP moiety from GTP to Mo-molybdopterin (Mo-MPT) cofactor (Moco or molybdenum cofactor) to form Mo-molybdopterin guanine dinucleotide (Mo-MGD) cofactor. The protein is Molybdenum cofactor guanylyltransferase of Vibrio parahaemolyticus serotype O3:K6 (strain RIMD 2210633).